Here is a 98-residue protein sequence, read N- to C-terminus: Citrate lyase acyl carrier protein (98 aa).

Residue Ser14 is modified to O-(phosphoribosyl dephospho-coenzyme A)serine.

This sequence belongs to the CitD family. In terms of assembly, oligomer with a subunit composition of (alpha,beta,gamma)6.

The protein localises to the cytoplasm. In terms of biological role, covalent carrier of the coenzyme of citrate lyase. The chain is Citrate lyase acyl carrier protein from Shigella boydii serotype 4 (strain Sb227).